The chain runs to 214 residues: Alpha-S1-casein (214 aa).

Positions 1–15 are cleaved as a signal peptide; sequence MKLLILTCLVAVALA. Serine 27 carries the phosphoserine; in allele A modification. Serine 56 bears the Phosphoserine; in allele C mark. Phosphoserine is present on residues serine 61 and serine 63. The interval 69 to 91 is disordered; sequence MEDAKQMKAGSSSSSEEIVPNSA. At serine 79 the chain carries Phosphoserine; in alleles A and C. Position 80 is a phosphoserine (serine 80). At serine 81 the chain carries Phosphoserine; in alleles A and C. Serine 82 carries the post-translational modification Phosphoserine. A Phosphoserine; in alleles A and C modification is found at serine 83. Serine 90 bears the Phosphoserine mark. The opioid-like peptide sequence stretch occupies residues 105 to 111; that stretch reads RYLGYLE. Residue serine 130 is modified to Phosphoserine.

It belongs to the alpha-casein family. As to expression, mammary gland specific. Secreted in milk.

It localises to the secreted. Important role in the capacity of milk to transport calcium phosphate. In Ovis aries (Sheep), this protein is Alpha-S1-casein (CSN1S1).